The following is a 397-amino-acid chain: Elongation factor Tu (397 aa).

The tr-type G domain occupies 10 to 206; the sequence is KPHVNIGTIG…EVDAYIPTPE (197 aa). The segment at 19–26 is G1; that stretch reads GHVDHGKT. Residue 19–26 participates in GTP binding; it reads GHVDHGKT. Thr-26 contacts Mg(2+). The segment at 60–64 is G2; it reads GITIN. Residues 81-84 are G3; the sequence is DCPG. GTP-binding positions include 81–85 and 136–139; these read DCPGH and NKAD. A G4 region spans residues 136-139; sequence NKAD. The interval 174-176 is G5; the sequence is SAL.

This sequence belongs to the TRAFAC class translation factor GTPase superfamily. Classic translation factor GTPase family. EF-Tu/EF-1A subfamily. In terms of assembly, monomer.

The protein localises to the cytoplasm. It catalyses the reaction GTP + H2O = GDP + phosphate + H(+). Functionally, GTP hydrolase that promotes the GTP-dependent binding of aminoacyl-tRNA to the A-site of ribosomes during protein biosynthesis. This Clostridium acetobutylicum (strain ATCC 824 / DSM 792 / JCM 1419 / IAM 19013 / LMG 5710 / NBRC 13948 / NRRL B-527 / VKM B-1787 / 2291 / W) protein is Elongation factor Tu.